A 141-amino-acid polypeptide reads, in one-letter code: MAKELTLSIIKPDAVAKSVIGEIYTRFEKAGLDIVAAKMTQLSREQAESFYDIHRARPFFKDLVDFMISGPVMIQVLKGENAVAKNREIMGATNPKEAAPGTIRADFADSIDANAVHGSDSLENAAREIAFFFEQHELCNR.

Residues Lys11, Phe59, Arg87, Thr93, Arg104, and Asn114 each contribute to the ATP site. His117 serves as the catalytic Pros-phosphohistidine intermediate.

This sequence belongs to the NDK family. As to quaternary structure, homotetramer. Mg(2+) is required as a cofactor.

The protein resides in the cytoplasm. It catalyses the reaction a 2'-deoxyribonucleoside 5'-diphosphate + ATP = a 2'-deoxyribonucleoside 5'-triphosphate + ADP. It carries out the reaction a ribonucleoside 5'-diphosphate + ATP = a ribonucleoside 5'-triphosphate + ADP. Major role in the synthesis of nucleoside triphosphates other than ATP. The ATP gamma phosphate is transferred to the NDP beta phosphate via a ping-pong mechanism, using a phosphorylated active-site intermediate. The polypeptide is Nucleoside diphosphate kinase (Legionella pneumophila subsp. pneumophila (strain Philadelphia 1 / ATCC 33152 / DSM 7513)).